The primary structure comprises 327 residues: Putative pumilio homolog 19 (327 aa).

Positions 1-324 constitute a PUM-HD domain; it reads MAVSDNTFSM…NIANILDTFR (324 aa). Pumilio repeat units lie at residues 79-114, 115-149, 150-185, 186-222, 223-260, and 261-295; these read SDSD…FCAA, ILRR…ALYE, RILY…DQLL, ELVV…NIAV, NLYG…ELLG, and CDGD…DLFW.

Its subcellular location is the cytoplasm. In terms of biological role, sequence-specific RNA-binding protein that regulates translation and mRNA stability by binding the 3'-UTR of target mRNAs. This Arabidopsis thaliana (Mouse-ear cress) protein is Putative pumilio homolog 19 (APUM19).